The following is a 320-amino-acid chain: Cytochrome f (320 aa).

Residues 1-35 form the signal peptide; the sequence is MQTRKTLSWIKEEITRSISVSLMIYIITGAYISNA. Positions 36, 56, 59, and 60 each coordinate heme. The helical transmembrane segment at 286–306 threads the bilayer; that stretch reads VQGLLFFLASVILAQIFLVLK.

It belongs to the cytochrome f family. The 4 large subunits of the cytochrome b6-f complex are cytochrome b6, subunit IV (17 kDa polypeptide, petD), cytochrome f and the Rieske protein, while the 4 small subunits are PetG, PetL, PetM and PetN. The complex functions as a dimer. The cofactor is heme.

It is found in the plastid. It localises to the chloroplast thylakoid membrane. In terms of biological role, component of the cytochrome b6-f complex, which mediates electron transfer between photosystem II (PSII) and photosystem I (PSI), cyclic electron flow around PSI, and state transitions. In Populus alba (White poplar), this protein is Cytochrome f.